Consider the following 2005-residue polypeptide: Chitin synthase 8 (2005 aa).

In terms of domain architecture, Myosin motor spans 5 to 773 (DEVAKLSQLT…AFRELEDELR (769 aa)). 108 to 115 (GDTSSGKS) lines the ATP pocket. Residues N164, N364, N390, and N546 are each glycosylated (N-linked (GlcNAc...) asparagine). A disordered region spans residues 585-631 (QSVKPMRAPSTRRPNRGNTIKRTNTIKKADDDDSDEDAADAADASTS). The span at 615 to 624 (DDDSDEDAAD) shows a compositional bias: acidic residues. The segment at 647–669 (LDLLLETLEDTKTWFTLCLRPND) is actin-binding. 2 consecutive transmembrane segments (helical) span residues 929–949 (KWVA…LSRF) and 965–985 (LAIN…IVVL). N-linked (GlcNAc...) asparagine glycosylation is present at N1076. A run of 3 helical transmembrane segments spans residues 1232 to 1252 (ILLA…LAAL), 1604 to 1624 (LIFT…IVFI), and 1626 to 1646 (LLST…IVLV). N1650 carries N-linked (GlcNAc...) asparagine glycosylation. 2 helical membrane passes run 1653-1673 (VPLT…VIFL) and 1680-1700 (MIGW…FLPL). 2 N-linked (GlcNAc...) asparagine glycosylation sites follow: N1770 and N1794. The disordered stretch occupies residues 1796–1821 (SFGHSPSPSYGGTPSQFGAFAPGPGS). The segment covering 1797–1811 (FGHSPSPSYGGTPSQ) has biased composition (polar residues). A glycan (N-linked (GlcNAc...) asparagine) is linked at N1882. The disordered stretch occupies residues 1912–1950 (FATAEQQQQQQQQQQAAGLSGSGGSKSPPREAVAGGLPS). Residues 1917–1930 (QQQQQQQQQQAAGL) are compositionally biased toward low complexity. The DEK-C domain maps to 1948–2003 (LPSDSQIKLDIRSLIAESDLTTITKKQLRAKLEQKYATSIESKKAFINSEIENVLS).

This sequence in the N-terminal section; belongs to the TRAFAC class myosin-kinesin ATPase superfamily. Myosin family. In the C-terminal section; belongs to the chitin synthase family. Class V subfamily.

It is found in the cell membrane. The protein localises to the cytoplasmic vesicle membrane. The protein resides in the cell tip. It carries out the reaction [(1-&gt;4)-N-acetyl-beta-D-glucosaminyl](n) + UDP-N-acetyl-alpha-D-glucosamine = [(1-&gt;4)-N-acetyl-beta-D-glucosaminyl](n+1) + UDP + H(+). Polymerizes chitin, a structural polymer of the cell wall and septum, by transferring the sugar moiety of UDP-GlcNAc to the non-reducing end of the growing chitin polymer. Involved in mating tube and dikaryotic hyphae formation and required for the formation of invading hyphae during plant infection. The chain is Chitin synthase 8 from Mycosarcoma maydis (Corn smut fungus).